The following is a 343-amino-acid chain: Flap endonuclease 1 (343 aa).

Positions 1–98 are N-domain; sequence MGVPIGDLVP…KELEKRREAR (98 aa). Residues D27, D80, E152, E154, D173, D175, and D236 each contribute to the Mg(2+) site. Residues 116-258 are I-domain; it reads EARKYAQRAT…KALEIVRYSR (143 aa). Positions 330–338 are interaction with PCNA; sequence RQSTLESWF.

This sequence belongs to the XPG/RAD2 endonuclease family. FEN1 subfamily. As to quaternary structure, interacts with PCNA. PCNA stimulates the nuclease activity without altering cleavage specificity. Mg(2+) serves as cofactor.

Its function is as follows. Structure-specific nuclease with 5'-flap endonuclease and 5'-3' exonuclease activities involved in DNA replication and repair. During DNA replication, cleaves the 5'-overhanging flap structure that is generated by displacement synthesis when DNA polymerase encounters the 5'-end of a downstream Okazaki fragment. Binds the unpaired 3'-DNA end and kinks the DNA to facilitate 5' cleavage specificity. Cleaves one nucleotide into the double-stranded DNA from the junction in flap DNA, leaving a nick for ligation. Also involved in the base excision repair (BER) pathway. Acts as a genome stabilization factor that prevents flaps from equilibrating into structures that lead to duplications and deletions. Also possesses 5'-3' exonuclease activity on nicked or gapped double-stranded DNA. This chain is Flap endonuclease 1, found in Pyrococcus horikoshii (strain ATCC 700860 / DSM 12428 / JCM 9974 / NBRC 100139 / OT-3).